Consider the following 337-residue polypeptide: Dihydroorotate dehydrogenase (quinone) (337 aa).

FMN-binding positions include 62-66 (AGLDK) and threonine 86. Lysine 66 contacts substrate. Substrate is bound at residue 111 to 115 (NRMGF). Residues asparagine 140 and asparagine 173 each coordinate FMN. Asparagine 173 is a binding site for substrate. Serine 176 functions as the Nucleophile in the catalytic mechanism. Residue asparagine 178 participates in substrate binding. Residues lysine 218 and threonine 246 each contribute to the FMN site. 247–248 (NT) provides a ligand contact to substrate. FMN contacts are provided by residues glycine 269, glycine 298, and 319–320 (YS).

Belongs to the dihydroorotate dehydrogenase family. Type 2 subfamily. As to quaternary structure, monomer. Requires FMN as cofactor.

The protein resides in the cell membrane. The enzyme catalyses (S)-dihydroorotate + a quinone = orotate + a quinol. It participates in pyrimidine metabolism; UMP biosynthesis via de novo pathway; orotate from (S)-dihydroorotate (quinone route): step 1/1. Catalyzes the conversion of dihydroorotate to orotate with quinone as electron acceptor. This Wigglesworthia glossinidia brevipalpis protein is Dihydroorotate dehydrogenase (quinone).